Here is a 219-residue protein sequence, read N- to C-terminus: Chloramphenicol acetyltransferase (219 aa).

His190 (proton acceptor) is an active-site residue.

This sequence belongs to the chloramphenicol acetyltransferase family. Homotrimer.

It carries out the reaction chloramphenicol + acetyl-CoA = chloramphenicol 3-acetate + CoA. In terms of biological role, this enzyme is an effector of chloramphenicol resistance in bacteria. The polypeptide is Chloramphenicol acetyltransferase (catQ) (Clostridium perfringens).